The primary structure comprises 554 residues: Phenylalanine--tRNA ligase beta subunit (554 aa).

The region spanning 276–351 is the B5 domain; it reads LTPKSRMISV…INYGYEKFEG (76 aa). Mg(2+)-binding residues include Asp329, Asp335, Glu338, and Glu339.

This sequence belongs to the phenylalanyl-tRNA synthetase beta subunit family. Type 2 subfamily. As to quaternary structure, tetramer of two alpha and two beta subunits. Mg(2+) serves as cofactor.

Its subcellular location is the cytoplasm. The enzyme catalyses tRNA(Phe) + L-phenylalanine + ATP = L-phenylalanyl-tRNA(Phe) + AMP + diphosphate + H(+). In Methanococcus maripaludis (strain C6 / ATCC BAA-1332), this protein is Phenylalanine--tRNA ligase beta subunit.